The following is a 470-amino-acid chain: ATP synthase subunit beta 2 (470 aa).

155-162 (GGAGVGKT) lines the ATP pocket.

The protein belongs to the ATPase alpha/beta chains family. In terms of assembly, F-type ATPases have 2 components, CF(1) - the catalytic core - and CF(0) - the membrane proton channel. CF(1) has five subunits: alpha(3), beta(3), gamma(1), delta(1), epsilon(1). CF(0) has three main subunits: a(1), b(2) and c(9-12). The alpha and beta chains form an alternating ring which encloses part of the gamma chain. CF(1) is attached to CF(0) by a central stalk formed by the gamma and epsilon chains, while a peripheral stalk is formed by the delta and b chains.

The protein localises to the cell inner membrane. The enzyme catalyses ATP + H2O + 4 H(+)(in) = ADP + phosphate + 5 H(+)(out). Its function is as follows. Produces ATP from ADP in the presence of a proton gradient across the membrane. The catalytic sites are hosted primarily by the beta subunits. In Nitrosospira multiformis (strain ATCC 25196 / NCIMB 11849 / C 71), this protein is ATP synthase subunit beta 2.